The chain runs to 46 residues: Ligatoxin-B (46 aa).

Disulfide bonds link Cys-3/Cys-40, Cys-4/Cys-32, and Cys-16/Cys-26.

It belongs to the plant thionin (TC 1.C.44) family.

The protein resides in the secreted. Functionally, thionins are small plant proteins which are toxic to animal cells. They seem to exert their toxic effect at the level of the cell membrane. Their precise function is not known. This Phoradendron liga (Argentine mistletoe) protein is Ligatoxin-B.